The following is a 390-amino-acid chain: Phosphopentomutase (390 aa).

Residues D10, D284, H289, D325, H326, and H337 each contribute to the Mn(2+) site.

It belongs to the phosphopentomutase family. Mn(2+) is required as a cofactor.

It is found in the cytoplasm. The catalysed reaction is 2-deoxy-alpha-D-ribose 1-phosphate = 2-deoxy-D-ribose 5-phosphate. It carries out the reaction alpha-D-ribose 1-phosphate = D-ribose 5-phosphate. The protein operates within carbohydrate degradation; 2-deoxy-D-ribose 1-phosphate degradation; D-glyceraldehyde 3-phosphate and acetaldehyde from 2-deoxy-alpha-D-ribose 1-phosphate: step 1/2. Isomerase that catalyzes the conversion of deoxy-ribose 1-phosphate (dRib-1-P) and ribose 1-phosphate (Rib-1-P) to deoxy-ribose 5-phosphate (dRib-5-P) and ribose 5-phosphate (Rib-5-P), respectively. This is Phosphopentomutase from Clostridioides difficile (strain 630) (Peptoclostridium difficile).